A 507-amino-acid chain; its full sequence is ATP synthase subunit alpha, mitochondrial (507 aa).

ATP is bound at residue 171-178 (GDRQTGKT).

Belongs to the ATPase alpha/beta chains family. F-type ATPases have 2 components, CF(1) - the catalytic core - and CF(0) - the membrane proton channel. CF(1) has five subunits: alpha(3), beta(3), gamma(1), delta(1), epsilon(1). CF(0) has three main subunits: a, b and c.

The protein resides in the mitochondrion. Its subcellular location is the mitochondrion inner membrane. In terms of biological role, mitochondrial membrane ATP synthase (F(1)F(0) ATP synthase or Complex V) produces ATP from ADP in the presence of a proton gradient across the membrane which is generated by electron transport complexes of the respiratory chain. F-type ATPases consist of two structural domains, F(1) - containing the extramembraneous catalytic core, and F(0) - containing the membrane proton channel, linked together by a central stalk and a peripheral stalk. During catalysis, ATP synthesis in the catalytic domain of F(1) is coupled via a rotary mechanism of the central stalk subunits to proton translocation. Subunits alpha and beta form the catalytic core in F(1). Rotation of the central stalk against the surrounding alpha(3)beta(3) subunits leads to hydrolysis of ATP in three separate catalytic sites on the beta subunits. Subunit alpha does not bear the catalytic high-affinity ATP-binding sites. In Brassica napus (Rape), this protein is ATP synthase subunit alpha, mitochondrial (ATPA).